The following is a 1407-amino-acid chain: DNA-directed RNA polymerase subunit beta' (1407 aa).

Zn(2+)-binding residues include Cys-70, Cys-72, Cys-85, and Cys-88. Asp-460, Asp-462, and Asp-464 together coordinate Mg(2+). The Zn(2+) site is built by Cys-814, Cys-889, Cys-896, and Cys-899. Residues 1384-1407 (LVGRSTSSGTEVTSPSKDAIPLGG) are disordered. Residues 1386–1399 (GRSTSSGTEVTSPS) show a composition bias toward polar residues.

It belongs to the RNA polymerase beta' chain family. The RNAP catalytic core consists of 2 alpha, 1 beta, 1 beta' and 1 omega subunit. When a sigma factor is associated with the core the holoenzyme is formed, which can initiate transcription. Mg(2+) is required as a cofactor. It depends on Zn(2+) as a cofactor.

It catalyses the reaction RNA(n) + a ribonucleoside 5'-triphosphate = RNA(n+1) + diphosphate. DNA-dependent RNA polymerase catalyzes the transcription of DNA into RNA using the four ribonucleoside triphosphates as substrates. The protein is DNA-directed RNA polymerase subunit beta' of Xylella fastidiosa (strain Temecula1 / ATCC 700964).